Consider the following 511-residue polypeptide: N-acetylgalactosamine-6-O-sulfatase (511 aa).

Serine 83 carries the 3-oxoalanine (Ser) modification.

The protein belongs to the sulfatase family. In terms of processing, the conversion to 3-oxoalanine (also known as C-formylglycine, FGly), of a serine or cysteine residue in prokaryotes and of a cysteine residue in eukaryotes, is critical for catalytic activity.

Functionally, exosulfatase involved in the degradation of the glycosaminoglycans (GAGs) chondroitin sulfate (CS) and dermatan sulfate (DS). Catalyzes the hydrolysis of the 6-sulfate groups of the N-acetyl-D-galactosamine 6-sulfate units. GAG-specific sulfatases play a key role in the persistence of the major human gut symbiont B.thetaiotaomicron in the host gastrointestinal tract. The protein is N-acetylgalactosamine-6-O-sulfatase of Bacteroides thetaiotaomicron (strain ATCC 29148 / DSM 2079 / JCM 5827 / CCUG 10774 / NCTC 10582 / VPI-5482 / E50).